The following is a 343-amino-acid chain: Dihydroorotate dehydrogenase (quinone) (343 aa).

Residues 61–65 (AGLDK) and threonine 85 each bind FMN. Position 65 (lysine 65) interacts with substrate. Position 110-114 (110-114 (NRMGF)) interacts with substrate. Positions 138 and 171 each coordinate FMN. Residue asparagine 171 participates in substrate binding. Serine 174 acts as the Nucleophile in catalysis. Asparagine 176 is a substrate binding site. Positions 216 and 244 each coordinate FMN. 245-246 (NT) serves as a coordination point for substrate. Residues glycine 267, glycine 296, and 317 to 318 (YS) contribute to the FMN site.

It belongs to the dihydroorotate dehydrogenase family. Type 2 subfamily. In terms of assembly, monomer. It depends on FMN as a cofactor.

It is found in the cell membrane. The enzyme catalyses (S)-dihydroorotate + a quinone = orotate + a quinol. The protein operates within pyrimidine metabolism; UMP biosynthesis via de novo pathway; orotate from (S)-dihydroorotate (quinone route): step 1/1. Functionally, catalyzes the conversion of dihydroorotate to orotate with quinone as electron acceptor. The sequence is that of Dihydroorotate dehydrogenase (quinone) from Pseudomonas savastanoi pv. phaseolicola (strain 1448A / Race 6) (Pseudomonas syringae pv. phaseolicola (strain 1448A / Race 6)).